The primary structure comprises 699 residues: NAD(P)H-quinone oxidoreductase subunit 5, chloroplastic (699 aa).

The next 15 membrane-spanning stretches (helical) occupy residues 1–21 (WIIP…LLLF), 32–52 (WAFP…NLSI), 81–101 (IDPL…TVLI), 117–137 (FAYM…SNLI), 139–159 (IYIF…FWFT), 177–197 (GDFG…SFEF), 216–236 (LFVT…SAQF), 250–270 (TPIS…FLVA), 272–292 (LLPL…IGII), 319–339 (LGYM…FHLI), 346–366 (ALLF…VGYS), 388–408 (ISFL…CFWS), 417–437 (WLYS…TAFY), 539–559 (LFPL…GISF), and 598–618 (IFSV…YKPI).

This sequence belongs to the complex I subunit 5 family. As to quaternary structure, NDH is composed of at least 16 different subunits, 5 of which are encoded in the nucleus.

Its subcellular location is the plastid. The protein localises to the chloroplast thylakoid membrane. It carries out the reaction a plastoquinone + NADH + (n+1) H(+)(in) = a plastoquinol + NAD(+) + n H(+)(out). It catalyses the reaction a plastoquinone + NADPH + (n+1) H(+)(in) = a plastoquinol + NADP(+) + n H(+)(out). Functionally, NDH shuttles electrons from NAD(P)H:plastoquinone, via FMN and iron-sulfur (Fe-S) centers, to quinones in the photosynthetic chain and possibly in a chloroplast respiratory chain. The immediate electron acceptor for the enzyme in this species is believed to be plastoquinone. Couples the redox reaction to proton translocation, and thus conserves the redox energy in a proton gradient. The protein is NAD(P)H-quinone oxidoreductase subunit 5, chloroplastic (ndhF) of Digitalis grandiflora (Yellow foxglove).